The primary structure comprises 497 residues: Cytochrome P450 2D6 (497 aa).

A substrate-binding site is contributed by Asp-301. Cys-443 serves as a coordination point for heme.

This sequence belongs to the cytochrome P450 family. It depends on heme as a cofactor.

Its subcellular location is the endoplasmic reticulum membrane. It is found in the microsome membrane. The catalysed reaction is (5Z,8Z,11Z,14Z)-eicosatetraenoate + reduced [NADPH--hemoprotein reductase] + O2 = (8R,9S)-epoxy-(5Z,11Z,14Z)-eicosatrienoate + oxidized [NADPH--hemoprotein reductase] + H2O + H(+). The enzyme catalyses (5Z,8Z,11Z,14Z)-eicosatetraenoate + reduced [NADPH--hemoprotein reductase] + O2 = (11R,12S)-epoxy-(5Z,8Z,14Z)-eicosatrienoate + oxidized [NADPH--hemoprotein reductase] + H2O + H(+). It carries out the reaction (5Z,8Z,11Z,14Z)-eicosatetraenoate + reduced [NADPH--hemoprotein reductase] + O2 = (14S,15R)-epoxy-(5Z,8Z,11Z)-eicosatrienoate + oxidized [NADPH--hemoprotein reductase] + H2O + H(+). It catalyses the reaction N-(5Z,8Z,11Z,14Z-eicosatetraenoyl)-ethanolamine + reduced [NADPH--hemoprotein reductase] + O2 = N-(8,9-epoxy-5Z,11Z,14Z-eicosatrienoyl)-ethanolamine + oxidized [NADPH--hemoprotein reductase] + H2O + H(+). The catalysed reaction is N-(5Z,8Z,11Z,14Z-eicosatetraenoyl)-ethanolamine + reduced [NADPH--hemoprotein reductase] + O2 = N-(11,12-epoxy-5Z,8Z,14Z-eicosatrienoyl)-ethanolamine + oxidized [NADPH--hemoprotein reductase] + H2O + H(+). The enzyme catalyses N-(5Z,8Z,11Z,14Z-eicosatetraenoyl)-ethanolamine + reduced [NADPH--hemoprotein reductase] + O2 = N-(14,15-epoxy-5Z,8Z,11Z-eicosatrienoyl)-ethanolamine + oxidized [NADPH--hemoprotein reductase] + H2O + H(+). It carries out the reaction N-(5Z,8Z,11Z,14Z-eicosatetraenoyl)-ethanolamine + reduced [NADPH--hemoprotein reductase] + O2 = N-(20-hydroxy-5Z,8Z,11Z,14Z-eicosatetraenoyl)-ethanolamine + oxidized [NADPH--hemoprotein reductase] + H2O + H(+). It catalyses the reaction (5Z,8Z,11Z,14Z,17Z)-eicosapentaenoate + reduced [NADPH--hemoprotein reductase] + O2 = (17S,18R)-epoxy-(5Z,8Z,11Z,14Z)-eicosatetraenoate + oxidized [NADPH--hemoprotein reductase] + H2O + H(+). The catalysed reaction is (4Z,7Z,10Z,13Z,16Z,19Z)-docosahexaenoate + reduced [NADPH--hemoprotein reductase] + O2 = (19R,20S)-epoxy-(4Z,7Z,10Z,13Z,16Z)-docosapentaenoate + oxidized [NADPH--hemoprotein reductase] + H2O + H(+). The enzyme catalyses (4Z,7Z,10Z,13Z,16Z,19Z)-docosahexaenoate + reduced [NADPH--hemoprotein reductase] + O2 = (19S,20R)-epoxy-(4Z,7Z,10Z,13Z,16Z)-docosapentaenoate + oxidized [NADPH--hemoprotein reductase] + H2O + H(+). It carries out the reaction cholesterol + reduced [NADPH--hemoprotein reductase] + O2 = 25-hydroxycholesterol + oxidized [NADPH--hemoprotein reductase] + H2O + H(+). It catalyses the reaction all-trans-retinol + reduced [NADPH--hemoprotein reductase] + O2 = all-trans-retinal + oxidized [NADPH--hemoprotein reductase] + 2 H2O + H(+). It functions in the pathway cofactor metabolism; retinol metabolism. It participates in lipid metabolism; fatty acid metabolism. Its pathway is steroid metabolism; cholesterol metabolism. A cytochrome P450 monooxygenase involved in the metabolism of fatty acids, steroids and retinoids. Mechanistically, uses molecular oxygen inserting one oxygen atom into a substrate, and reducing the second into a water molecule, with two electrons provided by NADPH via cytochrome P450 reductase (NADPH--hemoprotein reductase). Catalyzes the epoxidation of double bonds of polyunsaturated fatty acids (PUFA). Metabolizes endocannabinoid arachidonoylethanolamide (anandamide) to 20-hydroxyeicosatetraenoic acid ethanolamide (20-HETE-EA) and 8,9-, 11,12-, and 14,15-epoxyeicosatrienoic acid ethanolamides (EpETrE-EAs), potentially modulating endocannabinoid system signaling. Catalyzes the hydroxylation of carbon-hydrogen bonds. Metabolizes cholesterol toward 25-hydroxycholesterol, a physiological regulator of cellular cholesterol homeostasis. Catalyzes the oxidative transformations of all-trans retinol to all-trans retinal, a precursor for the active form all-trans-retinoic acid. Also involved in the oxidative metabolism of drugs such as antiarrhythmics, adrenoceptor antagonists, and tricyclic antidepressants. The polypeptide is Cytochrome P450 2D6 (CYP2D6) (Pan paniscus (Pygmy chimpanzee)).